The sequence spans 200 residues: LexA repressor (200 aa).

A DNA-binding region (H-T-H motif) is located at residues 28–48 (RAEIAQHFGFSSPNAAEQHLK). Catalysis depends on for autocatalytic cleavage activity residues S117 and K154.

Belongs to the peptidase S24 family. As to quaternary structure, homodimer.

It catalyses the reaction Hydrolysis of Ala-|-Gly bond in repressor LexA.. In terms of biological role, represses a number of genes involved in the response to DNA damage (SOS response), including recA and lexA. In the presence of single-stranded DNA, RecA interacts with LexA causing an autocatalytic cleavage which disrupts the DNA-binding part of LexA, leading to derepression of the SOS regulon and eventually DNA repair. The protein is LexA repressor of Thiobacillus denitrificans (strain ATCC 25259 / T1).